Reading from the N-terminus, the 548-residue chain is Biotin-dependent acetyl-/propionyl-coenzyme A carboxylase beta5 subunit (548 aa).

The disordered stretch occupies residues 1 to 23 (MTSVTDRSAHSAERSTEHTIDIH). The segment covering 7–21 (RSAHSAERSTEHTID) has biased composition (basic and acidic residues). In terms of domain architecture, CoA carboxyltransferase N-terminal spans 25 to 281 (TAGKLAELHK…NNSTDAPRYQ (257 aa)). One can recognise a CoA carboxyltransferase C-terminal domain in the interval 295-541 (DEDLELDTLI…ERKIAQLPPK (247 aa)).

The protein belongs to the AccD/PCCB family. Forms homohexamers. The biotin-dependent acyl-CoA carboxylase complex is composed of AccA3, which contains the biotin carboxylase (BC) and biotin carboxyl carrier protein (BCCP) domains, and AccD5, which contains the carboxyl transferase (CT) domain. The AccA3/AccD5 complex forms a dodecamer, and can associate with the epsilon subunit AccE5 (Rv3280), which stimulates carboxylation by the complex. Is also part of the long-chain acyl-CoA carboxylase (LCC) complex, which is composed of AccA3, AccD4, AccD5 and AccE5. The four subunits are essential for activity, but AccD5, together with AccE5, probably plays a structural role rather than a catalytic one.

It catalyses the reaction N(6)-carboxybiotinyl-L-lysyl-[protein] + acetyl-CoA = N(6)-biotinyl-L-lysyl-[protein] + malonyl-CoA. The enzyme catalyses N(6)-carboxybiotinyl-L-lysyl-[protein] + propanoyl-CoA = methylmalonyl-CoA + N(6)-biotinyl-L-lysyl-[protein]. Its pathway is lipid metabolism; mycolic acid biosynthesis. With respect to regulation, carboxylase activity of the AccA3/AccD5 complex is stimulated by interaction with AccE5. Component of a biotin-dependent acyl-CoA carboxylase complex. This subunit transfers the CO2 from carboxybiotin to the CoA ester substrate. When associated with the alpha3 subunit AccA3, is involved in the carboxylation of acetyl-CoA and propionyl-CoA, with a preference for propionyl-CoA. Is also required for the activity of the long-chain acyl-CoA carboxylase (LCC) complex. The sequence is that of Biotin-dependent acetyl-/propionyl-coenzyme A carboxylase beta5 subunit from Mycobacterium tuberculosis (strain ATCC 25618 / H37Rv).